The sequence spans 1303 residues: MKVADATPTPCIDFSKIQSIINPPDLLKVQLDSFHNFIQDSVPLEKRKDQGLEKVLRSAFPITDTRGLYLLEYISYSFDKPKYTVEECIERGLTYDVSLKIKLKLSYKDEADEPDWKETIQQEVYLGRIPYMTDRGTFIINGAERVVVAQLHRSPGVVFSEAVHPNGKKMYSAKIVPTRGSWIEFQTDINNQIFVYIDQKKNFLVTALLRAIGFAKDEDILGLFDLVEEVEVSSKSSKREQLLGQYLASDIIDMTTGEVVPARAAITEEIIDQIVAAGYKTVKVMKTTSPEKGVDKSVIINTILNDSSATEEEALEIVYEELRSNEAPDIDAARSFLERTFFNQKKYDLGDVGRYRIQKKLQNELAELSAYLEKRPELKELSDAIYERILQTISTYSEEPIGEDILVLTHYDIIAVINYLIKLINGMAEVDDVDHLANRRVRSVGEQLAAQFVIGLARMGKNVREKLNSRDTDKIAPADLINARTVSSVVSSFFATSQLSQFMDQTNPLAEMTNKRRVSALGPGGLTRERAGFEVRDVHYTHYGRLCPIETPEGPNIGLISSLSVYAEINDKGFIQTPYRVVENGQVTDKVVMLSAEDEENKITVPVSIELDENNRIAAESVQARTKGDYPLVLAEEVNYMDVSPVQIVSAAAALIPFLEHDDGNRALMGANMQRQAVPLLVSEAPIVGTGMEAKVARDSRAVIVAEGPGVVQCVTADRIEVRYDLDPENNTVSLLDPDEGVKVYKLIKFKRSNQDTCISQRPLVHNGQRVNAGDVLADSSSTDNGELALGKNVLVAFMPWRGYNFEDAIVLSERLVYDDVFTSIHVHEFESSVRDTKRGEEQFTRDIYNVSEDALRNLDENGIVRIGAEVKERDILVGKITPKGESDPTPEEKLLRAIFGDKSSDVKDASMHVPAGMKGIVIKTKLFSRKKKIGMDVKERMEAIDKQFDLKEADLRSRFAKWMKQYLNGKKSVAITSDKGKVLVPEGTVIDEALLAKFNGLPFLESIDLSKGIVSGAKTNENVVRLIREYRLKLKDLSDERENEKYKINVGDELPPGIEELAKVYIAQKRKIQVGDKMAGRHGNKGVVGKILPIEDMPFMEDGTPVDIVLNPLGVPSRMNIGQLYETSLGWAGKKLGVKFKTPIFSGATYTEVQEYLEKAGLPGHGKVKLFDGRTGEQFHDEVTVGYIYMLKLSHLVDDKIHARSIGPYSLITQQPLGGKAQFGGQRFGEMEVWALEAYGAANILREMLTVKSDDVIGRNKTYEAIVKGQNLPEPGTPESFNVLIRELQGLGLEIRIDDRVP.

It belongs to the RNA polymerase beta chain family. The RNAP catalytic core consists of 2 alpha, 1 beta, 1 beta' and 1 omega subunit. When a sigma factor is associated with the core the holoenzyme is formed, which can initiate transcription.

It carries out the reaction RNA(n) + a ribonucleoside 5'-triphosphate = RNA(n+1) + diphosphate. Functionally, DNA-dependent RNA polymerase catalyzes the transcription of DNA into RNA using the four ribonucleoside triphosphates as substrates. The polypeptide is DNA-directed RNA polymerase subunit beta (Chlorobaculum tepidum (strain ATCC 49652 / DSM 12025 / NBRC 103806 / TLS) (Chlorobium tepidum)).